We begin with the raw amino-acid sequence, 428 residues long: Spliceosome RNA helicase DDX39B (428 aa).

Residues 1–19 (MAENDVDNELLDYEEDEVE) are compositionally biased toward acidic residues. The segment at 1 to 35 (MAENDVDNELLDYEEDEVENAAGGDGSEAPPKKDV) is disordered. The Q motif signature appears at 45–73 (SGFRDFLLKPELLRAIVDCGFEHPSEVQH). Residues 76-249 (IPQAILGMDV…RKFMQDPMEI (174 aa)) enclose the Helicase ATP-binding domain. ATP is bound at residue 89-96 (AKSGMGKT). The DECD box signature appears at 196–199 (DECD). Residues 261–422 (GLQQYYVKLK…ELPDEIDISS (162 aa)) enclose the Helicase C-terminal domain.

Belongs to the DEAD box helicase family. DECD subfamily. In terms of assembly, component of the transcription/export (TREX) complex at least composed of ALYREF/THOC4, DDX39B, SARNP/CIP29, CHTOP and the THO subcomplex.

It is found in the nucleus. The protein resides in the nucleus speckle. It carries out the reaction ATP + H2O = ADP + phosphate + H(+). Its function is as follows. Involved in nuclear export of spliced and unspliced mRNA. Component of the TREX complex which is thought to couple mRNA transcription, processing and nuclear export, and specifically associates with spliced mRNA and not with unspliced pre-mRNA. The TREX complex is recruited to spliced mRNAs by a transcription-independent mechanism, binds to mRNA upstream of the exon-junction complex (EJC) and is recruited in a splicing- and cap-dependent manner to a region near the 5' end of the mRNA where it functions in mRNA export to the cytoplasm via the TAP/NXF1 pathway. Involved in transcription elongation and genome stability. Splice factor that is required for the first ATP-dependent step in spliceosome assembly and for the interaction of U2 snRNP with the branchpoint. Has both RNA-stimulated ATP binding/hydrolysis activity and ATP-dependent RNA unwinding activity. Even with the stimulation of RNA, the ATPase activity is weak. Can only hydrolyze ATP but not other NTPs. The RNA stimulation of ATPase activity does not have a strong preference for the sequence and length of the RNA. However, ssRNA stimulates the ATPase activity much more strongly than dsRNA. Can unwind 5' or 3' overhangs or blunt end RNA duplexes in vitro. The ATPase and helicase activities are not influenced by U2AF2; the effect of ALYREF/THOC4 is reported conflictingly. This Gallus gallus (Chicken) protein is Spliceosome RNA helicase DDX39B (DDX39B).